Consider the following 237-residue polypeptide: Uridylate kinase (237 aa).

ATP is bound at residue 11–14 (KLSG). Position 53 (Gly-53) interacts with UMP. Positions 54 and 58 each coordinate ATP. Residues Asp-73 and 134 to 141 (TGNPFFTT) contribute to the UMP site. Thr-161, Tyr-167, and Asp-170 together coordinate ATP.

This sequence belongs to the UMP kinase family. In terms of assembly, homohexamer.

Its subcellular location is the cytoplasm. It catalyses the reaction UMP + ATP = UDP + ADP. It participates in pyrimidine metabolism; CTP biosynthesis via de novo pathway; UDP from UMP (UMPK route): step 1/1. Inhibited by UTP. Functionally, catalyzes the reversible phosphorylation of UMP to UDP. The protein is Uridylate kinase of Paraburkholderia xenovorans (strain LB400).